Here is a 581-residue protein sequence, read N- to C-terminus: Arginine--tRNA ligase (581 aa).

A 'HIGH' region motif is present at residues 122–132 (PNVAKPMHVGH).

The protein belongs to the class-I aminoacyl-tRNA synthetase family. Monomer.

It is found in the cytoplasm. It carries out the reaction tRNA(Arg) + L-arginine + ATP = L-arginyl-tRNA(Arg) + AMP + diphosphate. The polypeptide is Arginine--tRNA ligase (Francisella tularensis subsp. tularensis (strain FSC 198)).